The primary structure comprises 207 residues: Large ribosomal subunit protein uL4 (207 aa).

The disordered stretch occupies residues H49–I78.

This sequence belongs to the universal ribosomal protein uL4 family. In terms of assembly, part of the 50S ribosomal subunit.

One of the primary rRNA binding proteins, this protein initially binds near the 5'-end of the 23S rRNA. It is important during the early stages of 50S assembly. It makes multiple contacts with different domains of the 23S rRNA in the assembled 50S subunit and ribosome. In terms of biological role, forms part of the polypeptide exit tunnel. This is Large ribosomal subunit protein uL4 from Streptococcus suis (strain 98HAH33).